Here is a 657-residue protein sequence, read N- to C-terminus: Threonine--tRNA ligase (657 aa).

The region spanning 7–70 (ILAVIALTLP…TADAAIEIIT (64 aa)) is the TGS domain. The segment at 253–555 (DHRKLGAELE…LIEHTAGNFP (303 aa)) is catalytic. Zn(2+) is bound by residues Cys-351, His-402, and His-532.

This sequence belongs to the class-II aminoacyl-tRNA synthetase family. In terms of assembly, homodimer. It depends on Zn(2+) as a cofactor.

Its subcellular location is the cytoplasm. The enzyme catalyses tRNA(Thr) + L-threonine + ATP = L-threonyl-tRNA(Thr) + AMP + diphosphate + H(+). Functionally, catalyzes the attachment of threonine to tRNA(Thr) in a two-step reaction: L-threonine is first activated by ATP to form Thr-AMP and then transferred to the acceptor end of tRNA(Thr). Also edits incorrectly charged L-seryl-tRNA(Thr). The polypeptide is Threonine--tRNA ligase (Pelodictyon phaeoclathratiforme (strain DSM 5477 / BU-1)).